Consider the following 200-residue polypeptide: 7-methyl-GTP pyrophosphatase (200 aa).

Aspartate 75 (proton acceptor) is an active-site residue.

This sequence belongs to the Maf family. YceF subfamily. A divalent metal cation serves as cofactor.

Its subcellular location is the cytoplasm. It carries out the reaction N(7)-methyl-GTP + H2O = N(7)-methyl-GMP + diphosphate + H(+). Functionally, nucleoside triphosphate pyrophosphatase that hydrolyzes 7-methyl-GTP (m(7)GTP). May have a dual role in cell division arrest and in preventing the incorporation of modified nucleotides into cellular nucleic acids. This chain is 7-methyl-GTP pyrophosphatase, found in Hydrogenovibrio crunogenus (strain DSM 25203 / XCL-2) (Thiomicrospira crunogena).